The primary structure comprises 294 residues: Putative glutamine amidotransferase HI_1037 (294 aa).

C18 is an active-site residue. A Glutamine amidotransferase type-2 domain is found at 18–266 (CQLLGMNCNT…NGGFVFFKNG (249 aa)).

This chain is Putative glutamine amidotransferase HI_1037, found in Haemophilus influenzae (strain ATCC 51907 / DSM 11121 / KW20 / Rd).